A 484-amino-acid chain; its full sequence is Proline--tRNA ligase (484 aa).

Belongs to the class-II aminoacyl-tRNA synthetase family. ProS type 3 subfamily. As to quaternary structure, homodimer.

Its subcellular location is the cytoplasm. It carries out the reaction tRNA(Pro) + L-proline + ATP = L-prolyl-tRNA(Pro) + AMP + diphosphate. Catalyzes the attachment of proline to tRNA(Pro) in a two-step reaction: proline is first activated by ATP to form Pro-AMP and then transferred to the acceptor end of tRNA(Pro). This Haloarcula marismortui (strain ATCC 43049 / DSM 3752 / JCM 8966 / VKM B-1809) (Halobacterium marismortui) protein is Proline--tRNA ligase.